The following is a 180-amino-acid chain: MALRPAKIDRYVDKPAYTRREYIRGAPGPRITIFDMGNPAGDFEFEVSLHTAEPVQIRQNALEAARTQLNRYLSKNVGRSNFHYKIRVYPFQVLRENPMATGRKADRYGNGMRRPFGKPIGLAARLKKDQKILTVRVNKQHLKFALAAMKRASMKFPCKCYYRIYDKEGNDITTKVLSTL.

It belongs to the universal ribosomal protein uL16 family.

The protein is Large ribosomal subunit protein uL16 of Thermococcus sibiricus (strain DSM 12597 / MM 739).